Consider the following 329-residue polypeptide: MNKKTIAMLGAGSWGTAVAIHLAKIGHKTLLWSHNPQHVALMAEQHSNPAYLPGIPFPENLIPSDNLIECVQSADYVIIAVPSHAFAEIINKIPKPTQGLAWLTKGVDPASHELLSQLVASRFGVDFPIAVISGPSFAKEVARFLPTALTLASNNTNYQKKMHQLFHHDNIRVYLSDDLIGVQLCGAVKNILAIACGISDGLGYGANAKAALITRGLAEMTRLGLSMGARQDTFLGLAGVGDLVLTCTDDQSRNRRFGLLLGREVPIPEAEHQIGQVVEGKHNAAQICAIANKNKVEMPICEQINALLHGIVHAQEAVNNLMSRPAKEE.

The NADPH site is built by S13, W14, H34, and K105. Residues K105, G134, and S136 each contribute to the sn-glycerol 3-phosphate site. A138 is a binding site for NADPH. K189, D242, S252, R253, and N254 together coordinate sn-glycerol 3-phosphate. The active-site Proton acceptor is K189. R253 is an NADPH binding site. NADPH contacts are provided by V277 and E279.

This sequence belongs to the NAD-dependent glycerol-3-phosphate dehydrogenase family.

It is found in the cytoplasm. It catalyses the reaction sn-glycerol 3-phosphate + NAD(+) = dihydroxyacetone phosphate + NADH + H(+). The enzyme catalyses sn-glycerol 3-phosphate + NADP(+) = dihydroxyacetone phosphate + NADPH + H(+). It participates in membrane lipid metabolism; glycerophospholipid metabolism. In terms of biological role, catalyzes the reduction of the glycolytic intermediate dihydroxyacetone phosphate (DHAP) to sn-glycerol 3-phosphate (G3P), the key precursor for phospholipid synthesis. This Legionella pneumophila subsp. pneumophila (strain Philadelphia 1 / ATCC 33152 / DSM 7513) protein is Glycerol-3-phosphate dehydrogenase [NAD(P)+].